The chain runs to 360 residues: Peptide chain release factor 1 (360 aa).

Q235 carries the N5-methylglutamine modification. The disordered stretch occupies residues 284-313; that stretch reads AKRQQAEASTRRNLLGSGDRSDRNRTYNFP.

The protein belongs to the prokaryotic/mitochondrial release factor family. Post-translationally, methylated by PrmC. Methylation increases the termination efficiency of RF1.

Its subcellular location is the cytoplasm. Peptide chain release factor 1 directs the termination of translation in response to the peptide chain termination codons UAG and UAA. This Salmonella gallinarum (strain 287/91 / NCTC 13346) protein is Peptide chain release factor 1.